The primary structure comprises 364 residues: Bifunctional protein Rv2228c (364 aa).

The RNase H type-1 domain maps to 1–139; that stretch reads MKVVIEADGG…MDAAAQSAAA (139 aa). Aspartate 8, glutamate 49, aspartate 73, and aspartate 123 together coordinate Mg(2+). The Tele-phosphohistidine intermediate role is filled by histidine 172. Glutamate 246 functions as the Proton donor/acceptor; for phosphatase activity in the catalytic mechanism.

The protein in the N-terminal section; belongs to the RNase H family. In the C-terminal section; belongs to the histidine phosphatase superfamily. The N-terminal domain alone is monomeric in solution but associates in the crystal to form a dimer. Requires Mg(2+) as cofactor.

The enzyme catalyses Endonucleolytic cleavage to 5'-phosphomonoester.. The catalysed reaction is adenosylcob(III)alamin 5'-phosphate + H2O = adenosylcob(III)alamin + phosphate. It catalyses the reaction alpha-ribazole 5'-phosphate + H2O = alpha-ribazole + phosphate. It functions in the pathway nucleoside biosynthesis; alpha-ribazole biosynthesis; alpha-ribazole from 5,6-dimethylbenzimidazole: step 2/2. Functionally, endonuclease that displays both RNase H activity with a hybrid RNA/DNA substrate as well as double-stranded RNase activity. As the only authenticated RNase HI in M.tuberculosis, probably plays an important role in the physiology of this organism, being likely involved in bacterial replication. Catalyzes the hydrolysis of the phospho group from alpha-ribazole 5'-phosphate to form alpha-ribazole. May also catalyze the conversion of adenosylcobalamin 5'-phosphate to adenosylcobalamin (vitamin B12). Has a possible role in B12 recycling, but the primary role of the C-terminal domain of this phosphatase enzyme could be phosphate generation to help bacterial survival within the macrophage, which is a phosphate-deprived environment. The sequence is that of Bifunctional protein Rv2228c from Mycobacterium tuberculosis (strain ATCC 25618 / H37Rv).